A 345-amino-acid polypeptide reads, in one-letter code: 4-hydroxyproline 2-epimerase 1 (345 aa).

Residue glutamine 85 coordinates substrate. The active-site Proton acceptor is the serine 93. Substrate-binding positions include 94–95 (GS) and aspartate 251. The active-site Proton donor is the cysteine 255. 256–257 (GT) is a binding site for substrate.

This sequence belongs to the proline racemase family.

It carries out the reaction trans-4-hydroxy-L-proline = cis-4-hydroxy-D-proline. Functionally, catalyzes the epimerization of trans-4-hydroxy-L-proline (t4LHyp) to cis-4-hydroxy-D-proline (c4DHyp). May be involved in a degradation pathway of t4LHyp. Can also catalyze the epimerization of trans-3-hydroxy-L-proline (t3LHyp) to cis-3-hydroxy-D-proline (c3DHyp) in vitro. Displays no proline racemase activity. In Rhizobium rhizogenes (strain K84 / ATCC BAA-868) (Agrobacterium radiobacter), this protein is 4-hydroxyproline 2-epimerase 1.